A 534-amino-acid polypeptide reads, in one-letter code: Phosphoenolpyruvate carboxykinase (ATP) (534 aa).

Positions 60, 195, and 201 each coordinate substrate. Residues Lys201, His221, and 237-245 each bind ATP; that span reads GLSGTGKTT. Positions 201 and 221 each coordinate Mn(2+). Residue Asp258 participates in Mn(2+) binding. The ATP site is built by Glu287, Arg324, and Thr449. Arg324 contacts substrate.

It belongs to the phosphoenolpyruvate carboxykinase (ATP) family. The cofactor is Mn(2+).

The protein resides in the cytoplasm. The catalysed reaction is oxaloacetate + ATP = phosphoenolpyruvate + ADP + CO2. It participates in carbohydrate biosynthesis; gluconeogenesis. In terms of biological role, involved in the gluconeogenesis. Catalyzes the conversion of oxaloacetate (OAA) to phosphoenolpyruvate (PEP) through direct phosphoryl transfer between the nucleoside triphosphate and OAA. The protein is Phosphoenolpyruvate carboxykinase (ATP) of Flavobacterium johnsoniae (strain ATCC 17061 / DSM 2064 / JCM 8514 / BCRC 14874 / CCUG 350202 / NBRC 14942 / NCIMB 11054 / UW101) (Cytophaga johnsonae).